Consider the following 178-residue polypeptide: Stage V sporulation protein T (178 aa).

The 47-residue stretch at 5–51 (GIVRRIDDLGRVVIPKEIRRTLRIREGDPLEIFVDRDGEVILKKYSP) folds into the SpoVT-AbrB domain. Positions 56–178 (GDFAKEYADA…AGFLARQMEQ (123 aa)) are GAF-like.

The protein to B.subtilis AbrB and Abh. In terms of assembly, homotetramer. Two monomers dimerize via their N-terminal swapped-hairpin domains. These dimers further associate into tetramers through helical interactions between their C-terminal GAF-like domains.

Transcriptional factor that positively regulates or negatively the expression of a large number of forespore-specific sigma G-dependent genes. May provide a mechanism of feedback control that is important for forespore development. SpoVT levels during spore formation have a major impact on the germination and the resistance of the resultant spores. This Bacillus subtilis (strain 168) protein is Stage V sporulation protein T.